We begin with the raw amino-acid sequence, 143 residues long: Transcription antitermination protein NusB (143 aa).

The protein belongs to the NusB family.

Functionally, involved in transcription antitermination. Required for transcription of ribosomal RNA (rRNA) genes. Binds specifically to the boxA antiterminator sequence of the ribosomal RNA (rrn) operons. The polypeptide is Transcription antitermination protein NusB (Buchnera aphidicola subsp. Acyrthosiphon pisum (strain 5A)).